We begin with the raw amino-acid sequence, 142 residues long: MAYKHIGVAISGNEEDALLVNKALELARHNDAHLTLIHIDDGLSELYPGIYFPATEDILQLLKNKSDNKLYKLTKNIQWPKTKLRIERGEMPETLLEIMQKEQCDLLVCGHHHSFINRLMPAYRGMINKLSADLLIVPFIDK.

The protein belongs to the universal stress protein A family.

Its subcellular location is the cytoplasm. In terms of biological role, required for resistance to DNA-damaging agents. The polypeptide is Universal stress protein D (uspD) (Escherichia coli O157:H7).